We begin with the raw amino-acid sequence, 307 residues long: Methionyl-tRNA formyltransferase (307 aa).

108-111 serves as a coordination point for (6S)-5,6,7,8-tetrahydrofolate; the sequence is SLLP.

The protein belongs to the Fmt family.

It carries out the reaction L-methionyl-tRNA(fMet) + (6R)-10-formyltetrahydrofolate = N-formyl-L-methionyl-tRNA(fMet) + (6S)-5,6,7,8-tetrahydrofolate + H(+). Attaches a formyl group to the free amino group of methionyl-tRNA(fMet). The formyl group appears to play a dual role in the initiator identity of N-formylmethionyl-tRNA by promoting its recognition by IF2 and preventing the misappropriation of this tRNA by the elongation apparatus. This chain is Methionyl-tRNA formyltransferase, found in Xylella fastidiosa (strain 9a5c).